A 122-amino-acid chain; its full sequence is Ribonuclease P protein component 1 (122 aa).

The protein belongs to the eukaryotic/archaeal RNase P protein component 1 family. In terms of assembly, consists of a catalytic RNA component and at least 4-5 protein subunits.

It is found in the cytoplasm. It catalyses the reaction Endonucleolytic cleavage of RNA, removing 5'-extranucleotides from tRNA precursor.. Part of ribonuclease P, a protein complex that generates mature tRNA molecules by cleaving their 5'-ends. In Thermococcus sibiricus (strain DSM 12597 / MM 739), this protein is Ribonuclease P protein component 1.